The following is an 88-amino-acid chain: Small ribosomal subunit protein uS17 (88 aa).

It belongs to the universal ribosomal protein uS17 family. As to quaternary structure, part of the 30S ribosomal subunit.

In terms of biological role, one of the primary rRNA binding proteins, it binds specifically to the 5'-end of 16S ribosomal RNA. The polypeptide is Small ribosomal subunit protein uS17 (Saccharophagus degradans (strain 2-40 / ATCC 43961 / DSM 17024)).